Here is a 321-residue protein sequence, read N- to C-terminus: 4-hydroxy-3-methylbut-2-enyl diphosphate reductase (321 aa).

C12 lines the [4Fe-4S] cluster pocket. (2E)-4-hydroxy-3-methylbut-2-enyl diphosphate contacts are provided by H41 and H74. The dimethylallyl diphosphate site is built by H41 and H74. Isopentenyl diphosphate is bound by residues H41 and H74. C96 serves as a coordination point for [4Fe-4S] cluster. H124 is a (2E)-4-hydroxy-3-methylbut-2-enyl diphosphate binding site. Position 124 (H124) interacts with dimethylallyl diphosphate. H124 provides a ligand contact to isopentenyl diphosphate. The active-site Proton donor is the E126. T167 contributes to the (2E)-4-hydroxy-3-methylbut-2-enyl diphosphate binding site. Residue C197 coordinates [4Fe-4S] cluster. (2E)-4-hydroxy-3-methylbut-2-enyl diphosphate is bound by residues S225, S226, N227, and S269. Dimethylallyl diphosphate contacts are provided by S225, S226, N227, and S269. The isopentenyl diphosphate site is built by S225, S226, N227, and S269.

It belongs to the IspH family. In terms of assembly, homodimer. [4Fe-4S] cluster serves as cofactor.

It carries out the reaction isopentenyl diphosphate + 2 oxidized [2Fe-2S]-[ferredoxin] + H2O = (2E)-4-hydroxy-3-methylbut-2-enyl diphosphate + 2 reduced [2Fe-2S]-[ferredoxin] + 2 H(+). The enzyme catalyses dimethylallyl diphosphate + 2 oxidized [2Fe-2S]-[ferredoxin] + H2O = (2E)-4-hydroxy-3-methylbut-2-enyl diphosphate + 2 reduced [2Fe-2S]-[ferredoxin] + 2 H(+). It functions in the pathway isoprenoid biosynthesis; dimethylallyl diphosphate biosynthesis; dimethylallyl diphosphate from (2E)-4-hydroxy-3-methylbutenyl diphosphate: step 1/1. It participates in isoprenoid biosynthesis; isopentenyl diphosphate biosynthesis via DXP pathway; isopentenyl diphosphate from 1-deoxy-D-xylulose 5-phosphate: step 6/6. Catalyzes the conversion of 1-hydroxy-2-methyl-2-(E)-butenyl 4-diphosphate (HMBPP) into a mixture of isopentenyl diphosphate (IPP) and dimethylallyl diphosphate (DMAPP). Acts in the terminal step of the DOXP/MEP pathway for isoprenoid precursor biosynthesis. This chain is 4-hydroxy-3-methylbut-2-enyl diphosphate reductase, found in Escherichia coli O6:K15:H31 (strain 536 / UPEC).